A 730-amino-acid polypeptide reads, in one-letter code: Acetylene hydratase (730 aa).

Residues C9 and C12 each coordinate [4Fe-4S] cluster. The active site involves D13. [4Fe-4S] cluster contacts are provided by C16 and C46. W-bis(molybdopterin guanine dinucleotide)-binding positions include K48, 111 to 114, C141, 172 to 173, 177 to 179, 199 to 202, 218 to 221, S296, Q300, 416 to 418, 422 to 423, 442 to 444, D460, R465, 602 to 613, R606, H676, D699, and R720; these read TEIN, KN, HNW, LDPR, YGTD, ASN, GY, YDQ, and FAGLREDSNFQS.

It belongs to the prokaryotic molybdopterin-containing oxidoreductase family. As to quaternary structure, monomer. Requires [4Fe-4S] cluster as cofactor. It depends on W-bis(molybdopterin guanine dinucleotide) as a cofactor.

It carries out the reaction acetaldehyde = acetylene + H2O. Catalyzes the hydration of acetylene to form acetaldehyde. Ethylene cannot act as a substrate. The chain is Acetylene hydratase from Syntrophotalea acetylenica (Pelobacter acetylenicus).